The following is a 259-amino-acid chain: Global transcriptional regulator CodY (259 aa).

The GAF domain stretch occupies residues 1 to 155 (MELLAKTRKL…SSTVVGMEIL (155 aa)). The segment at residues 203 to 222 (ASKIADRVGITRSVIVNALR) is a DNA-binding region (H-T-H motif). Ser215 is modified (phosphoserine).

The protein belongs to the CodY family.

It localises to the cytoplasm. DNA-binding global transcriptional regulator which is involved in the adaptive response to starvation and acts by directly or indirectly controlling the expression of numerous genes in response to nutrient availability. During rapid exponential growth, CodY is highly active and represses genes whose products allow adaptation to nutrient depletion. This Bacillus cereus (strain B4264) protein is Global transcriptional regulator CodY.